Reading from the N-terminus, the 86-residue chain is Putative membrane protein insertion efficiency factor (86 aa).

Belongs to the UPF0161 family.

Its subcellular location is the cell inner membrane. Its function is as follows. Could be involved in insertion of integral membrane proteins into the membrane. The polypeptide is Putative membrane protein insertion efficiency factor (Oleidesulfovibrio alaskensis (strain ATCC BAA-1058 / DSM 17464 / G20) (Desulfovibrio alaskensis)).